Here is a 151-residue protein sequence, read N- to C-terminus: Arginine repressor (151 aa).

It belongs to the ArgR family.

The protein localises to the cytoplasm. The protein operates within amino-acid biosynthesis; L-arginine biosynthesis [regulation]. Its function is as follows. Regulates arginine biosynthesis genes. This Enterococcus faecalis (strain ATCC 700802 / V583) protein is Arginine repressor.